A 160-amino-acid polypeptide reads, in one-letter code: D-aminoacyl-tRNA deacylase (160 aa).

The short motif at 146–147 is the Gly-cisPro motif, important for rejection of L-amino acids element; that stretch reads GP.

This sequence belongs to the DTD family. In terms of assembly, homodimer.

The protein localises to the cytoplasm. The enzyme catalyses glycyl-tRNA(Ala) + H2O = tRNA(Ala) + glycine + H(+). It carries out the reaction a D-aminoacyl-tRNA + H2O = a tRNA + a D-alpha-amino acid + H(+). In terms of biological role, an aminoacyl-tRNA editing enzyme that deacylates mischarged D-aminoacyl-tRNAs. Also deacylates mischarged glycyl-tRNA(Ala), protecting cells against glycine mischarging by AlaRS. Acts via tRNA-based rather than protein-based catalysis; rejects L-amino acids rather than detecting D-amino acids in the active site. By recycling D-aminoacyl-tRNA to D-amino acids and free tRNA molecules, this enzyme counteracts the toxicity associated with the formation of D-aminoacyl-tRNA entities in vivo and helps enforce protein L-homochirality. The chain is D-aminoacyl-tRNA deacylase from Desulfovibrio desulfuricans (strain ATCC 27774 / DSM 6949 / MB).